A 252-amino-acid chain; its full sequence is Imidazole glycerol phosphate synthase subunit HisF (252 aa).

Catalysis depends on residues D11 and D130.

It belongs to the HisA/HisF family. As to quaternary structure, heterodimer of HisH and HisF.

Its subcellular location is the cytoplasm. It catalyses the reaction 5-[(5-phospho-1-deoxy-D-ribulos-1-ylimino)methylamino]-1-(5-phospho-beta-D-ribosyl)imidazole-4-carboxamide + L-glutamine = D-erythro-1-(imidazol-4-yl)glycerol 3-phosphate + 5-amino-1-(5-phospho-beta-D-ribosyl)imidazole-4-carboxamide + L-glutamate + H(+). It participates in amino-acid biosynthesis; L-histidine biosynthesis; L-histidine from 5-phospho-alpha-D-ribose 1-diphosphate: step 5/9. Functionally, IGPS catalyzes the conversion of PRFAR and glutamine to IGP, AICAR and glutamate. The HisF subunit catalyzes the cyclization activity that produces IGP and AICAR from PRFAR using the ammonia provided by the HisH subunit. The chain is Imidazole glycerol phosphate synthase subunit HisF from Dictyoglomus thermophilum (strain ATCC 35947 / DSM 3960 / H-6-12).